The following is a 217-amino-acid chain: tRNA (guanine-N(7)-)-methyltransferase (217 aa).

Residues Glu-44, Glu-69, Asp-96, and Asp-118 each coordinate S-adenosyl-L-methionine. Residue Asp-118 is part of the active site. Lys-122 provides a ligand contact to substrate. An interaction with RNA region spans residues 124 to 129 (RHEKRR). Residues Asp-154 and 191 to 194 (TEYE) contribute to the substrate site.

This sequence belongs to the class I-like SAM-binding methyltransferase superfamily. TrmB family.

The catalysed reaction is guanosine(46) in tRNA + S-adenosyl-L-methionine = N(7)-methylguanosine(46) in tRNA + S-adenosyl-L-homocysteine. It participates in tRNA modification; N(7)-methylguanine-tRNA biosynthesis. In terms of biological role, catalyzes the formation of N(7)-methylguanine at position 46 (m7G46) in tRNA. The polypeptide is tRNA (guanine-N(7)-)-methyltransferase (Bacillus velezensis (strain DSM 23117 / BGSC 10A6 / LMG 26770 / FZB42) (Bacillus amyloliquefaciens subsp. plantarum)).